An 880-amino-acid polypeptide reads, in one-letter code: Tyrosine-protein kinase receptor TYRO3 (880 aa).

An N-terminal signal peptide occupies residues 1–28; that stretch reads MVYPGPPGLIAGLLLAALSLSCVDGAKA. 2 consecutive Ig-like C2-type domains span residues 29 to 114 and 125 to 206; these read LGFV…KSVS and PYFT…AIVE. Residues 29–414 lie on the Extracellular side of the membrane; that stretch reads LGFVGHGYNL…QRHPHTRMSW (386 aa). Asn-37 and Asn-49 each carry an N-linked (GlcNAc...) asparagine glycan. The cysteines at positions 50 and 103 are disulfide-linked. An N-linked (GlcNAc...) asparagine glycan is attached at Asn-143. Cys-146 and Cys-189 are disulfide-bonded. 2 consecutive Fibronectin type-III domains span residues 213–306 and 311–401; these read PPFN…TKET and LPQN…SKEE. N-linked (GlcNAc...) asparagine glycosylation is found at Asn-216, Asn-279, Asn-351, and Asn-365. The chain crosses the membrane as a helical span at residues 415-435; the sequence is VPMVLGILTALVTVVAMTLIF. Residues 436–880 are Cytoplasmic-facing; it reads LRKGRKETRF…MQEEQVVITL (445 aa). The Protein kinase domain maps to 503 to 774; that stretch reads FTLGRTLGKG…VDLKQRLEAI (272 aa). ATP contacts are provided by residues 509-517 and Lys-535; that span reads LGKGEFGSV. Catalysis depends on Asp-640, which acts as the Proton acceptor. Tyr-671 carries the phosphotyrosine; by autocatalysis modification. The tract at residues 846–880 is disordered; that stretch reads EWSSSAQNGEARGLLHEEEEEEEEEMQEEQVVITL. Positions 862 to 873 are enriched in acidic residues; sequence EEEEEEEEEMQE.

The protein belongs to the protein kinase superfamily. Tyr protein kinase family. AXL/UFO subfamily. In terms of processing, tyrosine phosphorylated upon receptor stimulation. As to expression, detected in brain, spinal cord, intestine, lung, stomach, ovary, testis, skin and eye.

It localises to the cell membrane. It carries out the reaction L-tyrosyl-[protein] + ATP = O-phospho-L-tyrosyl-[protein] + ADP + H(+). In terms of biological role, may be involved in cell adhesion processes, particularly in the central nervous system. This chain is Tyrosine-protein kinase receptor TYRO3 (tyro3), found in Xenopus laevis (African clawed frog).